We begin with the raw amino-acid sequence, 1142 residues long: MDRSDKKVNVEEVNVPSNLQIELEKSGTSSSVSLRSPTKSSATNLAGMAEGARDNASIASSSVDSLNMLLERQRVRQLNHPQHQQHISSSLAKTPTTTSSFCSSGSSKNKVKETNRISLTYDPVSKRKVLNTYEIIKELGHGQHGKVKLARDILSKQLVAIKIVDRHEKKQRKFFTFIKSSKISENDKIKREIAIMKKCHHKHVVQLIEVLDDLKSRKIYLVLEYCSRGEVKWCPPDCMESDAKGPSLLSFQETREILRGVVLGLEYLHYQGIIHRDIKPANLLISGDGTVKISDFGVSLAASSTNSSDSSESLDELELAKTVGTPAFFAPEMCLGEDAFTRYNLTKENLFRGSCISFMIDIWAVGVTLYCLLFGMLPFFSDFELKLFEKIVNDPLKFPTFKEIQSNKVSKVSCEEEYEMAKDLLLKLLEKNPQKRMTIPAIKKHPFVSWDFDHVPENDEKLLSSVLEQKLRFQCNQTDQFEPISISKHELKNAVSGVGKKIKESVLKSIPLKDPSDLSNKNYLHPTETTRGRGDANVIVSEGSVLSNIKELSANDGCLNTDSDTNININDDDHYSGDDNDGHLTKRELERELNKFDDKHEAGNMVNLPINSSFASLDSFYIDNFAMARMGMSSPEAGDSVSSVPNLPSAPSSTRLGRSPVFSGVTNQPSPIRPVLPQQKSSFCATGRYDKSHNSLLRNSSSHLTSYNSGRPSSRTGRMNSRNQNLPKIPNSLSKISTTKLTELRVPKDSEIPSPAKNPNADRLRRFPVKKNTKTPAIKDPPRININSSDKSGSKNSPIKSLYQRMKQSKDNSKTFEVRRGNFFSHFNGDDDDSSSQSSVTSSGSESDSELSSTSSSCTSGTQSRNSSNNNAYSETESLPFEFGVDSEDGSGVLLRDLPNEDQIRPFLDIQPCRRMKVKSSLNLEPPSVSSSSSSSSDEDELILNVGTAGHRRRHNSSKLSELSNSPQKGSNNFMYSNGSVHDSETTITPQNMDDLTLHQALSRSQPISKPGPLVLPKRLDQKKATTETSNLTDIVEFNGNNDHRKDKNFDKVLYSRDLLKDALSSTNAGRRRSIPSNKIRGRKDASITMSTNVGNDEHARNTSCHGDKGQENGAIKQRTHERSRSLTVAELNEEKRRSALP.

The interval Glu22–Ser41 is disordered. Residue Thr43 is modified to Phosphothreonine. Residues Gln82 to Lys93 show a composition bias toward polar residues. The segment at Gln82–Ser107 is disordered. The span at Thr94 to Ser107 shows a compositional bias: low complexity. The 316-residue stretch at Tyr133–Val448 folds into the Protein kinase domain. ATP-binding positions include Leu139–Val147 and Lys162. Asp277 acts as the Proton acceptor in catalysis. 6 disordered regions span residues Ser634–Gln678, Asn694–Ile799, Ser825–Glu875, Lys919–Ser971, Ser1005–Thr1027, and Ser1066–Pro1142. Positions Ser640 to Leu656 are enriched in polar residues. Low complexity predominate over residues Asn694–Ser706. Residues Tyr707–Leu741 show a composition bias toward polar residues. Basic and acidic residues predominate over residues Thr742–Glu751. Polar residues predominate over residues Asn785 to Ile799. 2 stretches are compositionally biased toward low complexity: residues Ser835–Ser868 and Ser920–Ser936. Positions Ser958 to Ser971 are enriched in polar residues. Phosphoserine is present on Ser964. The segment covering Asn1096–Gln1111 has biased composition (basic and acidic residues). Ser1126 carries the phosphoserine modification. Basic and acidic residues predominate over residues Asn1133–Pro1142.

This sequence belongs to the protein kinase superfamily. Ser/Thr protein kinase family. In terms of assembly, associates with the SNF1 kinase complex. Interacts with SNF1 and REG1. Post-translationally, autophosphorylated.

It is found in the cytoplasm. The catalysed reaction is L-seryl-[protein] + ATP = O-phospho-L-seryl-[protein] + ADP + H(+). The enzyme catalyses L-threonyl-[protein] + ATP = O-phospho-L-threonyl-[protein] + ADP + H(+). Serine/threonine-protein kinase that phosphorylates SNF1, the catalytic subunit of the SNF1 kinase complex. Acts as an activator of the SNF1 kinase complex and controls its nuclear localization upon glucose and nitrogen depletion. Also required for SNF1 kinase activation under other stress conditions like alkaline pH or presence of cadmium. This chain is SNF1-activating kinase 1 (SAK1), found in Saccharomyces cerevisiae (strain ATCC 204508 / S288c) (Baker's yeast).